The following is a 64-amino-acid chain: Conotoxin VnMLCL-033 (64 aa).

The first 19 residues, 1–19, serve as a signal peptide directing secretion; the sequence is MLCLPVFIILLLLASPAAP. Positions 20-43 are excised as a propeptide; it reads NPLQTRIQSNLIRAGPEDANIKTD. An Isoleucine amide modification is found at I63.

Belongs to the conotoxin T superfamily. Expressed by the venom duct.

The protein localises to the secreted. This chain is Conotoxin VnMLCL-033, found in Conus ventricosus (Mediterranean cone).